Here is a 510-residue protein sequence, read N- to C-terminus: MKQELVLILDFGGQYNQLIARRVREHNIYCEVVPYKITAEEIKLKNPKGLILTGGPSSVYGESTPRCEEEIFQLDIPILGICYGGQLMAHTLGGKVNRAKNREYGKTALQVDGNSKLFKEVAQDSICWMSHTDFIETAPAGFKITGTTADCPVAAMENQEKALYAVQFHPEVEHTEKGKEILKNFLYEVCHCQGDWTMENYIEKEIEAIRNLVGDRKVLCALSGGVDSSVAAVLVHQAIGDNLTCVFVDHGLLRKDEGDWVEDIFRNQFEMNFIRVNAEERFLGKLKGVTDPELKRKAIGELFIRVFEEEAQKIGDFDFLVQGTLYPDIIESGTETAAVIKSHHNVGGLPEDMKFQLIEPFKFLFKDEVRIAGLELGVPEEIVWRQPFPGPGLAVRVLGEITEEKLHIVREADAIVRDEIIKAGLHRQIWQYFAVLPNIMSVGVMGDERTYAHTIGIRAITSSDAMTADWARIPFEVLENMSRRIVNEVEGANRIVYDITSKPPSTVEWE.

The region spanning 5 to 195 (LVLILDFGGQ…LYEVCHCQGD (191 aa)) is the Glutamine amidotransferase type-1 domain. Residue cysteine 82 is the Nucleophile of the active site. Catalysis depends on residues histidine 169 and glutamate 171. The GMPS ATP-PPase domain maps to 196-385 (WTMENYIEKE…LGVPEEIVWR (190 aa)). ATP is bound at residue 223 to 229 (SGGVDSS).

As to quaternary structure, homodimer.

It carries out the reaction XMP + L-glutamine + ATP + H2O = GMP + L-glutamate + AMP + diphosphate + 2 H(+). Its pathway is purine metabolism; GMP biosynthesis; GMP from XMP (L-Gln route): step 1/1. Functionally, catalyzes the synthesis of GMP from XMP. The sequence is that of GMP synthase [glutamine-hydrolyzing] from Alkaliphilus metalliredigens (strain QYMF).